The chain runs to 101 residues: Large ribosomal subunit protein eL36 (101 aa).

Disordered stretches follow at residues 1-31 (MGEIAVGLNKGHQVTKKAGTPRPSRRKGFLS) and 75-101 (GTHMRGKKKREEMAGVLRKMQAASKGE).

The protein belongs to the eukaryotic ribosomal protein eL36 family.

The sequence is that of Large ribosomal subunit protein eL36 (RL36) from Ulva compressa (Green alga).